Consider the following 137-residue polypeptide: Nucleoside diphosphate kinase (137 aa).

ATP is bound by residues Lys-9, Phe-57, Arg-85, Thr-91, Arg-102, and Asn-112. His-115 acts as the Pros-phosphohistidine intermediate in catalysis.

Belongs to the NDK family. Homotetramer. Mg(2+) serves as cofactor.

The protein resides in the cytoplasm. The catalysed reaction is a 2'-deoxyribonucleoside 5'-diphosphate + ATP = a 2'-deoxyribonucleoside 5'-triphosphate + ADP. It carries out the reaction a ribonucleoside 5'-diphosphate + ATP = a ribonucleoside 5'-triphosphate + ADP. Functionally, major role in the synthesis of nucleoside triphosphates other than ATP. The ATP gamma phosphate is transferred to the NDP beta phosphate via a ping-pong mechanism, using a phosphorylated active-site intermediate. This is Nucleoside diphosphate kinase from Leptospira biflexa serovar Patoc (strain Patoc 1 / ATCC 23582 / Paris).